The chain runs to 248 residues: Probable transcriptional regulatory protein PSPTO_3980 (248 aa).

This sequence belongs to the TACO1 family.

The protein resides in the cytoplasm. This Pseudomonas syringae pv. tomato (strain ATCC BAA-871 / DC3000) protein is Probable transcriptional regulatory protein PSPTO_3980.